Consider the following 731-residue polypeptide: Ribonuclease R (731 aa).

The RNB domain occupies 260 to 589; sequence RTDLRHFPFF…LHRVIKYLLF (330 aa). Residues 647–728 form the S1 motif domain; the sequence is GCILNGVISN…NEKKIELSLY (82 aa).

This sequence belongs to the RNR ribonuclease family. RNase R subfamily. In terms of assembly, monomer.

It localises to the cytoplasm. The catalysed reaction is Exonucleolytic cleavage in the 3'- to 5'-direction to yield nucleoside 5'-phosphates.. In terms of biological role, 3'-5' exoribonuclease that releases 5'-nucleoside monophosphates and is involved in maturation of structured RNAs. This Buchnera aphidicola subsp. Acyrthosiphon pisum (strain APS) (Acyrthosiphon pisum symbiotic bacterium) protein is Ribonuclease R.